The sequence spans 303 residues: Cathepsin B-like CP1 (303 aa).

The first 19 residues, 1-19 (MALSLLLAVVCAKPLVSRA), serve as a signal peptide directing secretion. The N-linked (GlcNAc...) asparagine glycan is linked to Asn41. Intrachain disulfides connect Cys92/Cys119, Cys102/Cys145, and Cys138/Cys181. Cys105 is a catalytic residue. Residues His249 and Asn270 contribute to the active site.

Belongs to the peptidase C1 family.

The protein resides in the vacuole. In terms of biological role, thiol protease which is required for parasite excystation and invasion of the proximal small intestine of the human host. The chain is Cathepsin B-like CP1 (CP1) from Giardia intestinalis (Giardia lamblia).